The following is a 184-amino-acid chain: uncharacterized protein (184 aa).

It belongs to the eIF-2B alpha/beta/delta subunits family.

This is an uncharacterized protein from Rhodospirillum rubrum.